The sequence spans 354 residues: Protein ECM8 (354 aa).

Functionally, may be involved in cell wall organization and biogenesis. The sequence is that of Protein ECM8 (ECM8) from Saccharomyces cerevisiae (strain ATCC 204508 / S288c) (Baker's yeast).